We begin with the raw amino-acid sequence, 408 residues long: Glutaryl-CoA dehydrogenase, mitochondrial (408 aa).

Residues 1-13 (KGGKTQGRSAKSS) constitute a mitochondrion transit peptide. Residues 107 to 108 (RS) and S156 each bind substrate. Residues 147–156 (FGLTEPNHGS), S156, and 182–184 (WIT) each bind FAD. Position 210 is an N6-acetyllysine (K210). 257 to 264 (FGCLNNAR) is a substrate binding site. Residues R289, Q300, and 357–361 (DMLGG) contribute to the FAD site. The Proton acceptor role is filled by E384. G385 is a binding site for substrate. FAD contacts are provided by residues T386, 386–388 (THD), and F404.

The protein belongs to the acyl-CoA dehydrogenase family. As to quaternary structure, homotetramer. The cofactor is FAD.

It is found in the mitochondrion matrix. The enzyme catalyses glutaryl-CoA + oxidized [electron-transfer flavoprotein] + 2 H(+) = (2E)-butenoyl-CoA + reduced [electron-transfer flavoprotein] + CO2. Its pathway is amino-acid metabolism; lysine degradation. It participates in amino-acid metabolism; tryptophan metabolism. In terms of biological role, catalyzes the oxidative decarboxylation of glutaryl-CoA to crotonyl-CoA and CO(2) in the degradative pathway of L-lysine, L-hydroxylysine, and L-tryptophan metabolism. It uses electron transfer flavoprotein as its electron acceptor. This chain is Glutaryl-CoA dehydrogenase, mitochondrial (GCDH), found in Sus scrofa (Pig).